Reading from the N-terminus, the 106-residue chain is Nucleoid-associated protein RPB_0667 (106 aa).

This sequence belongs to the YbaB/EbfC family. As to quaternary structure, homodimer.

The protein localises to the cytoplasm. The protein resides in the nucleoid. Its function is as follows. Binds to DNA and alters its conformation. May be involved in regulation of gene expression, nucleoid organization and DNA protection. This Rhodopseudomonas palustris (strain HaA2) protein is Nucleoid-associated protein RPB_0667.